Consider the following 66-residue polypeptide: Beta-toxin Cbo1 (66 aa).

The 66-residue stretch at 1–66 (KEGYLVNHST…VWPLPKKTCN (66 aa)) folds into the LCN-type CS-alpha/beta domain. Intrachain disulfides connect cysteine 12-cysteine 65, cysteine 16-cysteine 41, cysteine 25-cysteine 46, and cysteine 29-cysteine 48. Residue asparagine 66 is modified to Asparagine amide.

It belongs to the long (4 C-C) scorpion toxin superfamily. Sodium channel inhibitor family. Beta subfamily. As to expression, expressed by the venom gland.

It is found in the secreted. Functionally, beta toxins bind voltage-independently at site-4 of sodium channels and shift the voltage of activation toward more negative potentials thereby affecting sodium channel activation and promoting spontaneous and repetitive firing. Is active on the human voltage-gated sodium channel Nav1.6/SCN8A when tested at 200 nM. In vivo, is toxic to mice when intraperitoneally injected. The polypeptide is Beta-toxin Cbo1 (Centruroides bonito (Scorpion)).